Here is a 339-residue protein sequence, read N- to C-terminus: Protein FAM76B (339 aa).

N-acetylalanine is present on alanine 2. Phosphoserine occurs at positions 22 and 148. Positions 144-243 (EQRKSLGSSH…INQSADSGGT (100 aa)) are disordered. Positions 148–160 (SLGSSHSNSSSSS) are enriched in low complexity. The segment covering 167–189 (HHPKHHHHHHHHHHRHSSSHHKI) has biased composition (basic residues). At serine 193 the chain carries Phosphoserine. The residue at position 215 (threonine 215) is a Phosphothreonine. The segment covering 215-224 (TPKKKPKLES) has biased composition (basic and acidic residues). Residues 228–243 (NGDSSSINQSADSGGT) are compositionally biased toward polar residues. Residues 248–328 (LISQLKEEVM…QVAALSKGKK (81 aa)) are a coiled coil.

Belongs to the FAM76 family. As to quaternary structure, interacts with HNRNPA2B1 (via C-terminus); the interaction results in retention of HNRNPA2B1 in the nucleus and inhibition of the NF-kappa-B-mediated inflammatory pathway.

Its subcellular location is the nucleus speckle. Functionally, negatively regulates the NF-kappa-B-mediated inflammatory pathway by preventing the translocation of HNRNPA2B1 from the nucleus to the cytoplasm. Inhibits the PI3K/Akt/NF-kappa-B pathway-mediated polarization of M1 macrophages by binding to and stabilizing PIK3CD mRNA, resulting in increased levels of PIK3CD protein and increased levels of phosphorylated downstream target AKT which leads to decreased NF-kappa-B signaling. This is Protein FAM76B (FAM76B) from Homo sapiens (Human).